Here is a 163-residue protein sequence, read N- to C-terminus: Transcription elongation factor GreB (163 aa).

This sequence belongs to the GreA/GreB family. GreB subfamily.

Functionally, necessary for efficient RNA polymerase transcription elongation past template-encoded arresting sites. The arresting sites in DNA have the property of trapping a certain fraction of elongating RNA polymerases that pass through, resulting in locked ternary complexes. Cleavage of the nascent transcript by cleavage factors such as GreA or GreB allows the resumption of elongation from the new 3'terminus. GreB releases sequences of up to 9 nucleotides in length. The sequence is that of Transcription elongation factor GreB from Vibrio parahaemolyticus serotype O3:K6 (strain RIMD 2210633).